Reading from the N-terminus, the 110-residue chain is MKFVLLFGVLLVTLFSYSSAEMLDDFDQADEDELLSLIEKEEARKDRIPKHHECTSNKHGCCRGHLFKYKCQCTTVVTQSGEETERCFCGTPPHHKAAELVVGFGKKIFG.

The first 20 residues, 1–20, serve as a signal peptide directing secretion; it reads MKFVLLFGVLLVTLFSYSSA. The propeptide occupies 21 to 44; sequence EMLDDFDQADEDELLSLIEKEEAR. 3 cysteine pairs are disulfide-bonded: cysteine 54/cysteine 71, cysteine 61/cysteine 89, and cysteine 73/cysteine 87.

This sequence belongs to the neurotoxin 19 (CSTX) family. 03 subfamily. In terms of tissue distribution, expressed by the venom gland.

It localises to the secreted. The sequence is that of U1-lycotoxin-Ls1gg from Lycosa singoriensis (Wolf spider).